Reading from the N-terminus, the 249-residue chain is Uridylate kinase (249 aa).

Residue 16–19 (KLSG) participates in ATP binding. Glycine 57 is a UMP binding site. ATP contacts are provided by glycine 58 and arginine 62. UMP-binding positions include aspartate 77 and 138–145 (AGMPYFST). The ATP site is built by asparagine 166, tyrosine 172, and aspartate 175.

It belongs to the UMP kinase family. In terms of assembly, homohexamer.

The protein resides in the cytoplasm. It catalyses the reaction UMP + ATP = UDP + ADP. Its pathway is pyrimidine metabolism; CTP biosynthesis via de novo pathway; UDP from UMP (UMPK route): step 1/1. With respect to regulation, inhibited by UTP. Catalyzes the reversible phosphorylation of UMP to UDP. The polypeptide is Uridylate kinase (Bifidobacterium adolescentis (strain ATCC 15703 / DSM 20083 / NCTC 11814 / E194a)).